The primary structure comprises 334 residues: MAPSPIMPRYHVGPMASTRRAISKKGFPRTRSFPVLTAPLDYLRDSPGKDIRSGLTDAFNEFLCVPEDKVVTIKRIIDLLHNASLLIDDIQDDSKLRRGVPVAHSIFGIAQTINSANLAYFLAQQELKKLSNPDAFAIYTDELINLHRGQGMELHWRESLHCPTEEEYMRMVQNKTGGLFRLAIRLLQGESRSDRDYVPLVDTLGTLFQIRDDYQNLQSDVYSKNKGFCEDISEGKFSYPVIHSIRARPGDLRLLNILKQRSEDLMVKQYAVSYINSTGSFEFCRGKIDCLAQWANLQLAALEEAEGAGRGDKLRAVLRLLDMKASGKQADVAS.

Residues lysine 49, arginine 52, and histidine 81 each contribute to the isopentenyl diphosphate site. Mg(2+)-binding residues include aspartate 88 and aspartate 92. Arginine 97 contributes to the dimethylallyl diphosphate binding site. Arginine 98 contributes to the isopentenyl diphosphate binding site. Residues lysine 175, threonine 176, and glutamine 209 each contribute to the dimethylallyl diphosphate site. Aspartate 212 lines the Mg(2+) pocket. 3 residues coordinate dimethylallyl diphosphate: asparagine 216, lysine 226, and lysine 236.

The protein belongs to the FPP/GGPP synthase family. The cofactor is Mg(2+).

The enzyme catalyses isopentenyl diphosphate + dimethylallyl diphosphate = (2E)-geranyl diphosphate + diphosphate. It catalyses the reaction isopentenyl diphosphate + (2E)-geranyl diphosphate = (2E,6E)-farnesyl diphosphate + diphosphate. It carries out the reaction isopentenyl diphosphate + (2E,6E)-farnesyl diphosphate = (2E,6E,10E)-geranylgeranyl diphosphate + diphosphate. It participates in secondary metabolite biosynthesis. Its function is as follows. Geranylgeranyl pyrophosphate synthase; part of the gene cluster that mediates the biosynthesis of paspalitrems, indole-diterpene (IDT) mycotoxins that are potent tremorgens in mammals. The geranylgeranyl diphosphate (GGPP) synthase idtG is proposed to catalyze the first step in IDT biosynthesis via catalysis of a series of iterative condensations of isopentenyl diphosphate (IPP) with dimethylallyl diphosphate (DMAPP), geranyl diphosphate (GPP), and farnesyl diphosphate (FPP), to form GGPP. Condensation of indole-3-glycerol phosphate with GGPP by the prenyltransferase idtC then forms 3-geranylgeranylindole (3-GGI). Epoxidation of the two terminal alkenes of the geranylgeranyl moiety by the FAD-dependent monooxygenase idtM, and cyclization by the terpene cyclase idtB then leads to the production of paspaline. The cytochrome P450 monooxygenase idtP then catalyzes oxidative elimination of the pendant methyl group at C-12 of paspaline and generates the C-10 ketone to yield 13-desoxypaxilline. The cytochrome P450 monooxygenase idtQ may catalyze the C-13 oxidation of 13-desoxypaxilline to afford paxilline. Considering that both paspalicine and paxilline were detected in C.paspali, idtQ also catalyzes the formation of paspalinine from 13-desoxypaxilline via paspalicine as an intermediate. Finally, the alpha-prenyltransferase idtF prenylates paspalinine at the C-20 or the C-21 positions to yield paspalitrems A and C, respectively. The hydroxylation of paspalitrem A at C-32 by a still unknown oxidase affords paspalitrem B. This Claviceps paspali (Rye ergot fungus) protein is Geranylgeranyl pyrophosphate synthase idtG.